Consider the following 651-residue polypeptide: Probable endo-1,3(4)-beta-glucanase NFIA_089530 (651 aa).

A signal peptide spans 1-21; it reads MAPSSLFLSVGSLIASSLVSA. The 254-residue stretch at 36-289 folds into the GH16 domain; sequence ESWQGESFIN…WAGNVFAEST (254 aa). The N-linked (GlcNAc...) asparagine glycan is linked to Asn-64. Glu-145 serves as the catalytic Nucleophile. The active-site Proton donor is the Glu-150. Asn-200 carries N-linked (GlcNAc...) asparagine glycosylation. A compositionally biased stretch (low complexity) spans 364-378; sequence PVPAETTAVPQPAQT. Disordered regions lie at residues 364–422 and 508–557; these read PVPA…ESTS and SEIP…PVPA. Polar residues-rich tracts occupy residues 379-400 and 520-535; these read NTVATSAADYATQSSAETTTVP and QAVSTGSFDDSDTAQG. Residues 542–557 show a composition bias toward low complexity; the sequence is SIASASAAPSTIPVPA. Asn-629 carries the GPI-anchor amidated asparagine lipid modification. Residues 630–651 constitute a propeptide, removed in mature form; sequence GANRMSVGLSGLIGVMFIAALA.

It belongs to the glycosyl hydrolase 16 family.

It is found in the cell membrane. The enzyme catalyses Endohydrolysis of (1-&gt;3)- or (1-&gt;4)-linkages in beta-D-glucans when the glucose residue whose reducing group is involved in the linkage to be hydrolyzed is itself substituted at C-3.. Its function is as follows. Mixed-linked glucanase involved in the degradation of complex natural cellulosic substrates. The polypeptide is Probable endo-1,3(4)-beta-glucanase NFIA_089530 (Neosartorya fischeri (strain ATCC 1020 / DSM 3700 / CBS 544.65 / FGSC A1164 / JCM 1740 / NRRL 181 / WB 181) (Aspergillus fischerianus)).